A 26-amino-acid polypeptide reads, in one-letter code: Glycyl-poneratoxin (26 aa).

Arg25 bears the Arginine amide; in delta-paraponeritoxin-Pc1a mark.

Post-translationally, the glycine-PoTx is a non-amidated form of poneratoxin, with an extra-Gly at C-terminus. This loss of amidation does not alter toxin activity on Nav1.7/SCN9A. Expressed by the venom gland.

Its subcellular location is the secreted. Functionally, toxin that causes pain in vertebrates by targeting tetrodotoxin (TTX)-sensitive sodium channels in peripheral sensory neurons. Also blocks synaptic transmission and stimulates smooth muscle contraction. Converts the normally rapidly activating and inactivating sodium channel current into one that does not inactivate. Is active on both Nav1.6/SCN8A and Nav1.7/SCN9A sodium channels, with a much potent activity on Nav1.6/SCN8A (EC(50)=97 nM on human channels) than on Nav1.7/SCN9A (EC(50)=2.3 uM on human and EC(50)=1.8 uM on mouse channels). On these channels, causes a sustained current, a reduction in peak current amplitude and a hyperpolarising shift. Modulates Nav1.7/SCN9A in a non-competitive manner with TTX or tetracaine. Toxin-induced persistant current is very slowly reversible with repeated wash steps over 30 minutes. In vivo, shallow intraplantar injection in mice causes immediate, long-lasting and near-maximal nocifensive behaviors, which decrease with coinjection of TTX. When tested on insects, causes paralysis but not mortality at high doses. The polypeptide is Glycyl-poneratoxin (Paraponera clavata (Bullet ant)).